A 109-amino-acid polypeptide reads, in one-letter code: Aquaporin-2 (109 aa).

The Cytoplasmic portion of the chain corresponds to 1–6; the sequence is SIAFSR. Residues 7-27 form a helical membrane-spanning segment; it reads AVFSEFLATLLFVFFGLGSAL. Residues 28 to 35 are Extracellular-facing; that stretch reads NWPQALPS. The helical transmembrane segment at 36 to 54 threads the bilayer; it reads VLQIAMAFGLAIGTLVQTL. Residues 55-59 are Cytoplasmic-facing; sequence GHISG. The segment at residues 60 to 69 is an intramembrane region (discontinuously helical); it reads AHINPAVTVA. Positions 63–65 match the NPA 1 motif; sequence NPA. The Cytoplasmic segment spans residues 70–80; that stretch reads CLVGCHVSFLR. A helical membrane pass occupies residues 81–102; sequence ATFYVAAQLLGAVAGAALLHEL. The Extracellular segment spans residues 103–109; that stretch reads TPPDIRG.

It belongs to the MIP/aquaporin (TC 1.A.8) family. As to quaternary structure, homotetramer. In terms of processing, serine phosphorylation is necessary and sufficient for expression at the apical membrane. Endocytosis is not phosphorylation-dependent. Post-translationally, N-glycosylated.

It localises to the apical cell membrane. The protein resides in the basolateral cell membrane. Its subcellular location is the cell membrane. The protein localises to the cytoplasmic vesicle membrane. It is found in the golgi apparatus. It localises to the trans-Golgi network membrane. The enzyme catalyses H2O(in) = H2O(out). The catalysed reaction is glycerol(in) = glycerol(out). Its function is as follows. Forms a water-specific channel that provides the plasma membranes of renal collecting duct with high permeability to water, thereby permitting water to move in the direction of an osmotic gradient. Plays an essential role in renal water homeostasis. Could also be permeable to glycerol. This chain is Aquaporin-2, found in Amblysomus hottentotus (Hottentot golden mole).